Reading from the N-terminus, the 464-residue chain is Putative F-box/LRR-repeat protein At3g59160 (464 aa).

Positions 12-60 (KDMINDLPDALLCHVLSYLTTKEAASTSLLSRRWRYLLAFVPNLEFDDS) constitute an F-box domain. LRR repeat units follow at residues 172–198 (TLKIRDGPPIDVKHVHLPKLKTLHLES), 200–225 (MFDEEDIGFSKLLSGCPELEELVLHH), 233–258 (SCSVSVATLKRLTFCCNNMKFCGMHE), 336–367 (VLCLSADTLEVLTYCCKQIPIFNNLTHVTIQS), 368–393 (TPKVGWKSLLKLLKNSPKLQTLVFQG), and 408–433 (KIEKQIEKVKHFLETMPHLEQLVLHY).

In Arabidopsis thaliana (Mouse-ear cress), this protein is Putative F-box/LRR-repeat protein At3g59160.